The primary structure comprises 453 residues: Tryptophan biosynthesis protein TrpCF (453 aa).

The segment at 1 to 257 (MMQTVLAKIV…AAVRRVLLGE (257 aa)) is indole-3-glycerol phosphate synthase. The N-(5'-phosphoribosyl)anthranilate isomerase stretch occupies residues 258 to 453 (NKVCGLTRGQ…ASVFQTLRAY (196 aa)).

This sequence in the N-terminal section; belongs to the TrpC family. In the C-terminal section; belongs to the TrpF family. Monomer.

The enzyme catalyses N-(5-phospho-beta-D-ribosyl)anthranilate = 1-(2-carboxyphenylamino)-1-deoxy-D-ribulose 5-phosphate. It carries out the reaction 1-(2-carboxyphenylamino)-1-deoxy-D-ribulose 5-phosphate + H(+) = (1S,2R)-1-C-(indol-3-yl)glycerol 3-phosphate + CO2 + H2O. The protein operates within amino-acid biosynthesis; L-tryptophan biosynthesis; L-tryptophan from chorismate: step 3/5. It functions in the pathway amino-acid biosynthesis; L-tryptophan biosynthesis; L-tryptophan from chorismate: step 4/5. In terms of biological role, bifunctional enzyme that catalyzes two sequential steps of tryptophan biosynthetic pathway. The first reaction is catalyzed by the isomerase, coded by the TrpF domain; the second reaction is catalyzed by the synthase, coded by the TrpC domain. The sequence is that of Tryptophan biosynthesis protein TrpCF (trpC) from Escherichia coli (strain K12).